The following is a 256-amino-acid chain: tRNA-cytidine(32) 2-sulfurtransferase (256 aa).

Residues 35–40 (SGGKDS) carry the PP-loop motif motif. Positions 110, 113, and 201 each coordinate [4Fe-4S] cluster.

The protein belongs to the TtcA family. In terms of assembly, homodimer. The cofactor is Mg(2+). [4Fe-4S] cluster serves as cofactor.

Its subcellular location is the cytoplasm. The enzyme catalyses cytidine(32) in tRNA + S-sulfanyl-L-cysteinyl-[cysteine desulfurase] + AH2 + ATP = 2-thiocytidine(32) in tRNA + L-cysteinyl-[cysteine desulfurase] + A + AMP + diphosphate + H(+). It functions in the pathway tRNA modification. Its function is as follows. Catalyzes the ATP-dependent 2-thiolation of cytidine in position 32 of tRNA, to form 2-thiocytidine (s(2)C32). The sulfur atoms are provided by the cysteine/cysteine desulfurase (IscS) system. This is tRNA-cytidine(32) 2-sulfurtransferase from Coxiella burnetii (strain RSA 331 / Henzerling II).